A 246-amino-acid chain; its full sequence is Homeobox protein SIX6 (246 aa).

A DNA-binding region (homeobox) is located at residues 128–187; sequence GEQKTHCFKERTRHLLREWYLQDPYPNPSKKRELAQATGLTPTQVGNWFKNRRQRDRAAA. Residues 190–246 are disordered; that stretch reads NRLQQQVLSQGSGRALRAEGDGTPEVLGVATSPAASLSSKAATSAISITSSDSECDI. Over residues 191–201 the composition is skewed to polar residues; the sequence is RLQQQVLSQGS. Thr-212 is modified (phosphothreonine). The segment covering 219 to 246 has biased composition (low complexity); it reads ATSPAASLSSKAATSAISITSSDSECDI. Phosphoserine occurs at positions 221, 225, 227, and 228.

This sequence belongs to the SIX/Sine oculis homeobox family. In terms of assembly, interacts with TLE4 and TLE5. As to expression, expressed in the developing and adult retina. Also expressed in the hypothalamic and the pituitary regions.

The protein resides in the nucleus. May be involved in eye development. The protein is Homeobox protein SIX6 (SIX6) of Homo sapiens (Human).